A 190-amino-acid polypeptide reads, in one-letter code: Recombination protein RecR (190 aa).

The segment at cysteine 58–cysteine 73 adopts a C4-type zinc-finger fold. Positions asparagine 81–proline 167 constitute a Toprim domain.

The protein belongs to the RecR family.

Its function is as follows. May play a role in DNA repair. It seems to be involved in an RecBC-independent recombinational process of DNA repair. It may act with RecF and RecO. The protein is Recombination protein RecR of Campylobacter jejuni subsp. jejuni serotype O:6 (strain 81116 / NCTC 11828).